A 180-amino-acid polypeptide reads, in one-letter code: Large ribosomal subunit protein uL5 (180 aa).

Belongs to the universal ribosomal protein uL5 family. As to quaternary structure, part of the 50S ribosomal subunit; part of the 5S rRNA/L5/L18/L25 subcomplex. Contacts the 5S rRNA and the P site tRNA. Forms a bridge to the 30S subunit in the 70S ribosome.

In terms of biological role, this is one of the proteins that bind and probably mediate the attachment of the 5S RNA into the large ribosomal subunit, where it forms part of the central protuberance. In the 70S ribosome it contacts protein S13 of the 30S subunit (bridge B1b), connecting the 2 subunits; this bridge is implicated in subunit movement. Contacts the P site tRNA; the 5S rRNA and some of its associated proteins might help stabilize positioning of ribosome-bound tRNAs. In Chloroflexus aurantiacus (strain ATCC 29364 / DSM 637 / Y-400-fl), this protein is Large ribosomal subunit protein uL5.